The following is a 446-amino-acid chain: MSTILQNVPAGQKVGIAFSGGLDTSAALHWMKLKGAIPYAYTANLGQPDEPDYDEIPRKAMLYGAENARLIDCRAQLANEGIAALQAGAFHVTTAGVTYFNTTPLGRAVTGTMLVSAMKEDDVHIWGDGSTYKGNDIERFYRYGLLTNPNLKIYKPWLDQLFIDELGGRAEMSAFMTKAGFGYKMSAEKAYSTDSNMLGATHEAKDLENLDSGMQIVQPIMGVAFWKDEVEVKRETVSVRFEEGRPVALNGVEHANLVELILEANRIGGRHGLGMSDQIENRIIEAKSRGIYEAPGLALLFIAYERLVTGIHNEDTIEQYRDHGRKLGRLLYQGRWFDPQAIMLRETAQRWVARAVTGEVTIELRRGNDYSILNTVSPNLTYKPERLSMEKVAGAFTPLDRIGQLTMRNLDIVDTREKLAIYTRTGLLSPGQGTAVPRLSNDDETK.

ATP-binding positions include 17-25 (AFSGGLDTS) and alanine 43. Tyrosine 99 contacts L-citrulline. Positions 129 and 131 each coordinate ATP. L-aspartate contacts are provided by threonine 131, asparagine 135, and aspartate 136. Residue asparagine 135 coordinates L-citrulline. Aspartate 136 is an ATP binding site. L-citrulline is bound by residues arginine 139 and serine 192. Aspartate 194 provides a ligand contact to ATP. The L-citrulline site is built by threonine 201, glutamate 203, and glutamate 280.

It belongs to the argininosuccinate synthase family. Type 2 subfamily. As to quaternary structure, homotetramer.

It is found in the cytoplasm. The enzyme catalyses L-citrulline + L-aspartate + ATP = 2-(N(omega)-L-arginino)succinate + AMP + diphosphate + H(+). The protein operates within amino-acid biosynthesis; L-arginine biosynthesis; L-arginine from L-ornithine and carbamoyl phosphate: step 2/3. The protein is Argininosuccinate synthase of Variovorax paradoxus (strain S110).